Consider the following 266-residue polypeptide: Phosphatidylglycerol--prolipoprotein diacylglyceryl transferase (266 aa).

4 helical membrane passes run 14-34 (FGPL…AFFW), 55-75 (FLFY…ILFY), 91-111 (WKGG…MWLF), and 117-137 (VSMF…LFFG). An a 1,2-diacyl-sn-glycero-3-phospho-(1'-sn-glycerol)-binding site is contributed by Arg138. A run of 3 helical transmembrane segments spans residues 172–192 (YPTQ…ILMF), 201–221 (GAAS…VEFF), and 235–255 (WVTM…ALVV).

Belongs to the Lgt family.

It localises to the cell inner membrane. The enzyme catalyses L-cysteinyl-[prolipoprotein] + a 1,2-diacyl-sn-glycero-3-phospho-(1'-sn-glycerol) = an S-1,2-diacyl-sn-glyceryl-L-cysteinyl-[prolipoprotein] + sn-glycerol 1-phosphate + H(+). It functions in the pathway protein modification; lipoprotein biosynthesis (diacylglyceryl transfer). Catalyzes the transfer of the diacylglyceryl group from phosphatidylglycerol to the sulfhydryl group of the N-terminal cysteine of a prolipoprotein, the first step in the formation of mature lipoproteins. This chain is Phosphatidylglycerol--prolipoprotein diacylglyceryl transferase, found in Hydrogenovibrio crunogenus (strain DSM 25203 / XCL-2) (Thiomicrospira crunogena).